The sequence spans 420 residues: Serine hydroxymethyltransferase (420 aa).

Residues Leu-121 and 125-127 (GHL) contribute to the (6S)-5,6,7,8-tetrahydrofolate site. An N6-(pyridoxal phosphate)lysine modification is found at Lys-230. Residues Glu-246 and 354-356 (SPF) contribute to the (6S)-5,6,7,8-tetrahydrofolate site.

This sequence belongs to the SHMT family. In terms of assembly, homodimer. Pyridoxal 5'-phosphate serves as cofactor.

It is found in the cytoplasm. It catalyses the reaction (6R)-5,10-methylene-5,6,7,8-tetrahydrofolate + glycine + H2O = (6S)-5,6,7,8-tetrahydrofolate + L-serine. Its pathway is one-carbon metabolism; tetrahydrofolate interconversion. It functions in the pathway amino-acid biosynthesis; glycine biosynthesis; glycine from L-serine: step 1/1. Catalyzes the reversible interconversion of serine and glycine with tetrahydrofolate (THF) serving as the one-carbon carrier. This reaction serves as the major source of one-carbon groups required for the biosynthesis of purines, thymidylate, methionine, and other important biomolecules. Also exhibits THF-independent aldolase activity toward beta-hydroxyamino acids, producing glycine and aldehydes, via a retro-aldol mechanism. This chain is Serine hydroxymethyltransferase, found in Rickettsia typhi (strain ATCC VR-144 / Wilmington).